We begin with the raw amino-acid sequence, 116 residues long: Immunoglobulin heavy variable 3-66 (116 aa).

Positions 1-19 (MEFGLSWVFLVAILKGVQC) are cleaved as a signal peptide. A framework-1 region spans residues 20 to 44 (EVQLVESGGGLIQPGGSLRLSCAAS). The 97-residue stretch at 20–116 (EVQLVESGGG…EDTAVYYCAR (97 aa)) folds into the Ig-like domain. Cys41 and Cys114 are oxidised to a cystine. Positions 45-52 (GFTVSSNY) are complementarity-determining-1. The tract at residues 53–69 (MSWVRQAPGKGLEWVSV) is framework-2. Positions 70–76 (IYSCGST) are complementarity-determining-2. The framework-3 stretch occupies residues 77-114 (YYADSVKGRFTISRDNSKNTLYLQMNSLRAEDTAVYYC). The interval 115-116 (AR) is complementarity-determining-3.

Immunoglobulins are composed of two identical heavy chains and two identical light chains; disulfide-linked.

It localises to the secreted. The protein localises to the cell membrane. Functionally, v region of the variable domain of immunoglobulin heavy chains that participates in the antigen recognition. Immunoglobulins, also known as antibodies, are membrane-bound or secreted glycoproteins produced by B lymphocytes. In the recognition phase of humoral immunity, the membrane-bound immunoglobulins serve as receptors which, upon binding of a specific antigen, trigger the clonal expansion and differentiation of B lymphocytes into immunoglobulins-secreting plasma cells. Secreted immunoglobulins mediate the effector phase of humoral immunity, which results in the elimination of bound antigens. The antigen binding site is formed by the variable domain of one heavy chain, together with that of its associated light chain. Thus, each immunoglobulin has two antigen binding sites with remarkable affinity for a particular antigen. The variable domains are assembled by a process called V-(D)-J rearrangement and can then be subjected to somatic hypermutations which, after exposure to antigen and selection, allow affinity maturation for a particular antigen. This Homo sapiens (Human) protein is Immunoglobulin heavy variable 3-66.